A 925-amino-acid chain; its full sequence is Probable replication restart protein PriA (925 aa).

Cys645, Cys648, Cys654, Cys657, Cys672, Cys675, Cys685, and Cys688 together coordinate Zn(2+).

Belongs to the helicase family. PriA subfamily. As to quaternary structure, interacts with DnaB (DR_0549). Component of the replication restart primosome. Zn(2+) is required as a cofactor.

Functionally, initiates the restart of stalled replication forks, which reloads the replicative helicase on sites other than the origin of replication. Recognizes abandoned replication forks and remodels them to uncover a helicase loading site. Promotes assembly of the primosome at these replication forks. Recognizes and binds DNA at stalled replication forks, also binds single-stranded (ss)DNA. The sequence is that of Probable replication restart protein PriA from Deinococcus radiodurans (strain ATCC 13939 / DSM 20539 / JCM 16871 / CCUG 27074 / LMG 4051 / NBRC 15346 / NCIMB 9279 / VKM B-1422 / R1).